The sequence spans 225 residues: 3-demethoxyubiquinol 3-hydroxylase (225 aa).

A compositionally biased stretch (polar residues) spans 1–11; it reads MSVASTSSGFT. The disordered stretch occupies residues 1–20; it reads MSVASTSSGFTPFSRRRGPL. Positions 74, 104, 107, 156, 188, and 191 each coordinate Fe cation. Residues 181 to 203 form a disordered region; the sequence is VSQMKDDEAQHRASAERAGGVPL. Residues 184–195 are compositionally biased toward basic and acidic residues; that stretch reads MKDDEAQHRASA.

It belongs to the COQ7 family. Fe cation is required as a cofactor.

It localises to the cell membrane. The enzyme catalyses a 5-methoxy-2-methyl-3-(all-trans-polyprenyl)benzene-1,4-diol + AH2 + O2 = a 3-demethylubiquinol + A + H2O. It functions in the pathway cofactor biosynthesis; ubiquinone biosynthesis. Functionally, catalyzes the hydroxylation of 2-nonaprenyl-3-methyl-6-methoxy-1,4-benzoquinol during ubiquinone biosynthesis. In Bordetella petrii (strain ATCC BAA-461 / DSM 12804 / CCUG 43448), this protein is 3-demethoxyubiquinol 3-hydroxylase.